Consider the following 313-residue polypeptide: Protein sprouty homolog 1 (313 aa).

Residue Met1 is modified to N-acetylmethionine. The interval 43 to 152 (QIKAIRGSNE…RSDRVIRTQP (110 aa)) is disordered. The segment covering 69-79 (PRPEKQERTHE) has biased composition (basic and acidic residues). Low complexity predominate over residues 106-125 (SRSTSTGSAASSGSSSSVSS). The SPR domain maps to 177–289 (QCGKCKCGEC…CYDWTHRPGC (113 aa)).

The protein belongs to the sprouty family. Forms heterodimers with SPRY2. Interacts with TESK1. Interacts with CAV1 (via C-terminus).

The protein localises to the cytoplasm. It is found in the membrane. Its function is as follows. Inhibits fibroblast growth factor (FGF)-induced retinal lens fiber differentiation, probably by inhibiting FGF-mediated phosphorylation of ERK1/2. Inhibits TGFB-induced epithelial-to-mesenchymal transition in lens epithelial cells. The sequence is that of Protein sprouty homolog 1 (Spry1) from Mus musculus (Mouse).